The sequence spans 396 residues: Na(+)/H(+) antiporter NhaA 1 (396 aa).

Transmembrane regions (helical) follow at residues 9-29, 59-79, 95-115, 125-145, 154-174, 177-197, 200-220, 223-243, 260-280, 281-301, 332-352, and 373-393; these read LHNEAASGVLIFLAAVAAMLI, LLLWINDGLMAVFFLLVGLEL, VLPVVGAVGGIVGPALIYVMF, GWAVPTATDIAFAMGVLALLG, LFLLTLAIIDDLVAIVIIAIF, SDLSVGSLTVAGGAIALLFLL, IGVKGIAPYVLVGMVLWVAVL, GVHATLAGVVLAMAIPIKGET, VVGLVILPLFAFANAGVSLAG, LGLNVLLEPVAMGIGLGLLLG, GVALLCGIGFTMSLFISSLAF, and ILSGSLVSGVLGYLVLRFSLA.

Belongs to the NhaA Na(+)/H(+) (TC 2.A.33) antiporter family.

The protein resides in the cell inner membrane. It carries out the reaction Na(+)(in) + 2 H(+)(out) = Na(+)(out) + 2 H(+)(in). Its function is as follows. Na(+)/H(+) antiporter that extrudes sodium in exchange for external protons. The polypeptide is Na(+)/H(+) antiporter NhaA 1 (Magnetococcus marinus (strain ATCC BAA-1437 / JCM 17883 / MC-1)).